The chain runs to 81 residues: Mu/omega-theraphotoxin-Hs1a (81 aa).

An N-terminal signal peptide occupies residues 1 to 21 (MRASMFLALAGLVLLFVVCYA). A propeptide spanning residues 22 to 48 (SESEEKEFPRELLFKFFAVDDFKGEER) is cleaved from the precursor. Intrachain disulfides connect Cys50–Cys65, Cys57–Cys70, and Cys64–Cys77.

It belongs to the neurotoxin 10 (Hwtx-1) family. 23 (HwTx-I) subfamily. Expressed by the venom gland.

The protein resides in the secreted. Functionally, lethal toxin with multiple biological activities. Inhibits voltage-gated TTX-sensitive sodium channels in DRG neurons (IC(50)=55 nM) and also shows activity when directly tested on Nav1.7/SCN9A (IC(50)=25.1-630 nM). Inhibits N-type calcium channels (Cav2.2/CACNA1B (IC(50)=100 nM)). Also blocks neuromuscular transmission. In vivo, intrathecal injected toxin shows analgesic activity in the rat formalin-induced pain model, without induction of motor dysfunction in rats. The polypeptide is Mu/omega-theraphotoxin-Hs1a (Cyriopagopus schmidti (Chinese bird spider)).